The following is a 176-amino-acid chain: Cytidylate kinase (176 aa).

An ATP-binding site is contributed by G7–S15.

Belongs to the cytidylate kinase family. Type 2 subfamily.

Its subcellular location is the cytoplasm. The catalysed reaction is CMP + ATP = CDP + ADP. It catalyses the reaction dCMP + ATP = dCDP + ADP. This chain is Cytidylate kinase, found in Methanosphaerula palustris (strain ATCC BAA-1556 / DSM 19958 / E1-9c).